The chain runs to 169 residues: Putative phosphoesterase SACOL1020 (169 aa).

Residue histidine 34 is the Proton donor of the active site. 2 short sequence motifs (HXTX) span residues 34 to 37 (HVTI) and 115 to 118 (HFTI). Histidine 115 (proton acceptor) is an active-site residue.

Belongs to the 2H phosphoesterase superfamily. YjcG family.

The polypeptide is Putative phosphoesterase SACOL1020 (Staphylococcus aureus (strain COL)).